A 469-amino-acid chain; its full sequence is Tryptophan biosynthesis protein TrpCF (469 aa).

An indole-3-glycerol phosphate synthase region spans residues 1–271 (MSEQLSEHIS…LAVRKIVLGE (271 aa)). Residues 272 to 469 (HKVCGLTHPD…QQVFQQLRNY (198 aa)) are N-(5'-phosphoribosyl)anthranilate isomerase.

The protein in the N-terminal section; belongs to the TrpC family. This sequence in the C-terminal section; belongs to the TrpF family. As to quaternary structure, monomer.

It carries out the reaction N-(5-phospho-beta-D-ribosyl)anthranilate = 1-(2-carboxyphenylamino)-1-deoxy-D-ribulose 5-phosphate. The catalysed reaction is 1-(2-carboxyphenylamino)-1-deoxy-D-ribulose 5-phosphate + H(+) = (1S,2R)-1-C-(indol-3-yl)glycerol 3-phosphate + CO2 + H2O. It functions in the pathway amino-acid biosynthesis; L-tryptophan biosynthesis; L-tryptophan from chorismate: step 3/5. Its pathway is amino-acid biosynthesis; L-tryptophan biosynthesis; L-tryptophan from chorismate: step 4/5. In terms of biological role, bifunctional enzyme that catalyzes two sequential steps of tryptophan biosynthetic pathway. The first reaction is catalyzed by the isomerase, coded by the TrpF domain; the second reaction is catalyzed by the synthase, coded by the TrpC domain. The chain is Tryptophan biosynthesis protein TrpCF (trpCF) from Vibrio cholerae serotype O1 (strain ATCC 39315 / El Tor Inaba N16961).